An 83-amino-acid chain; its full sequence is uncharacterized protein (83 aa).

This is an uncharacterized protein from Thermoproteus tenax (TTV1).